We begin with the raw amino-acid sequence, 30 residues long: U-actitoxin-Bcg2a (30 aa).

The cysteines at positions 7 and 27 are disulfide-linked.

Its subcellular location is the secreted. It localises to the nematocyst. Functionally, possible voltage-gated potassium channel (Kv) blocker. This is U-actitoxin-Bcg2a from Bunodosoma cangicum (Sea anemone).